Here is a 581-residue protein sequence, read N- to C-terminus: FAD-dependent monooxygenase DEP4 (581 aa).

43–46 contacts FAD; the sequence is VWSK. NADP(+) is bound at residue 54-56; sequence FAQ. Residue valine 108 participates in FAD binding. NADP(+)-binding positions include 183–202, 219–220, and 351–352; these read VGRSKSSYDAVYHLLCEGKR, AP, and DI. Methionine 470 lines the FAD pocket.

The protein belongs to the FAD-binding monooxygenase family. The cofactor is FAD.

The protein operates within polyketide biosynthesis. Functionally, FAD-dependent monooxygenase; part of the gene cluster that mediates the biosynthesis of depudecin, a highly oxidized eleven-carbon linear polyketide that acts as a histone deacetylase (HDAC) inhibitor and makes a small contribution to pathogenesis. The reducing polyketide synthase DEP5 is the central enzyme in depudecin biosynthesis by yielding the backbone polyketide chain. The monooxygenases DEP2 and DEP4, as well as the uncharacterized protein DEP1, then act as tailoring enzymes to modify the intermediate polyketide chain into depudecin. This chain is FAD-dependent monooxygenase DEP4, found in Alternaria brassicicola (Dark leaf spot agent).